A 546-amino-acid polypeptide reads, in one-letter code: Probable ganciclovir kinase (546 aa).

The segment covering M1 to K11 has biased composition (polar residues). The segment at M1–R29 is disordered. Residues T12–R29 show a composition bias toward basic residues. ATP contacts are provided by residues L185 to V193 and K202. Catalysis depends on D297, which acts as the Proton acceptor.

This sequence belongs to the protein kinase superfamily. Tyr protein kinase family. HCMV ganciclovir subfamily.

Functionally, phosphorylates the antiviral nucleoside analog ganciclovir. The chain is Probable ganciclovir kinase (U69) from Human herpesvirus 7 (strain JI) (HHV-7).